The primary structure comprises 218 residues: Probable nicotinate-nucleotide adenylyltransferase (218 aa).

Belongs to the NadD family.

The catalysed reaction is nicotinate beta-D-ribonucleotide + ATP + H(+) = deamido-NAD(+) + diphosphate. It participates in cofactor biosynthesis; NAD(+) biosynthesis; deamido-NAD(+) from nicotinate D-ribonucleotide: step 1/1. Catalyzes the reversible adenylation of nicotinate mononucleotide (NaMN) to nicotinic acid adenine dinucleotide (NaAD). This chain is Probable nicotinate-nucleotide adenylyltransferase, found in Burkholderia cenocepacia (strain ATCC BAA-245 / DSM 16553 / LMG 16656 / NCTC 13227 / J2315 / CF5610) (Burkholderia cepacia (strain J2315)).